An 888-amino-acid chain; its full sequence is Probable disease resistance protein At5g63020 (888 aa).

Positions L22–Q66 form a coiled coil. The NB-ARC domain occupies A139 to G442. ATP is bound at residue G181 to T188. LRR repeat units follow at residues V512–P533, Q534–L555, M558–C580, S582–R604, and K605–T627.

Belongs to the disease resistance NB-LRR family.

In terms of biological role, probable disease resistance protein. This Arabidopsis thaliana (Mouse-ear cress) protein is Probable disease resistance protein At5g63020.